The sequence spans 197 residues: Protein RESISTANCE TO PHYTOPHTHORA 1, chloroplastic (197 aa).

The transit peptide at 1-52 directs the protein to the chloroplast; sequence MSWSLCSTHGVSSSIALTYGFRHRRRSTFRIFATSDGLEPKDDPPESPLPSS. A disordered region spans residues 35 to 56; the sequence is SDGLEPKDDPPESPLPSSSSAL. 4 helical membrane passes run 93–113, 120–140, 150–170, and 173–193; these read FEVQ…NLLF, LWRL…LRAR, LNYL…FWKS, and LVWS…LGWL.

Its subcellular location is the plastid. The protein resides in the chloroplast. The protein localises to the membrane. In terms of biological role, plays a positive role in the immune response to the oomycetes P.brassicae, including induced oxidative burst (e.g. H(2)O(2)) and enhanced expression of defense-related genes. This Arabidopsis thaliana (Mouse-ear cress) protein is Protein RESISTANCE TO PHYTOPHTHORA 1, chloroplastic.